Reading from the N-terminus, the 201-residue chain is Recombination protein RecR (201 aa).

The segment at 60–75 (CKTCGNIDTQNPCTVC) adopts a C4-type zinc-finger fold. The region spanning 83 to 178 (SIIVVVADVA…KVTRLAHGVP (96 aa)) is the Toprim domain.

It belongs to the RecR family.

In terms of biological role, may play a role in DNA repair. It seems to be involved in an RecBC-independent recombinational process of DNA repair. It may act with RecF and RecO. This chain is Recombination protein RecR, found in Rhodopseudomonas palustris (strain HaA2).